Reading from the N-terminus, the 142-residue chain is Large ribosomal subunit protein uL11 (142 aa).

This sequence belongs to the universal ribosomal protein uL11 family. In terms of assembly, part of the ribosomal stalk of the 50S ribosomal subunit. Interacts with L10 and the large rRNA to form the base of the stalk. L10 forms an elongated spine to which L12 dimers bind in a sequential fashion forming a multimeric L10(L12)X complex. In terms of processing, one or more lysine residues are methylated.

Forms part of the ribosomal stalk which helps the ribosome interact with GTP-bound translation factors. The polypeptide is Large ribosomal subunit protein uL11 (Erwinia tasmaniensis (strain DSM 17950 / CFBP 7177 / CIP 109463 / NCPPB 4357 / Et1/99)).